The chain runs to 265 residues: Beta-lactamase SHV-4 (265 aa).

Catalysis depends on S45, which acts as the Acyl-ester intermediate. An intrachain disulfide couples C52 to C98. E143 functions as the Proton acceptor in the catalytic mechanism. 209–211 (KTG) is a binding site for substrate.

The protein belongs to the class-A beta-lactamase family.

It carries out the reaction a beta-lactam + H2O = a substituted beta-amino acid. In terms of biological role, SHV enzymes hydrolyze broad spectrum cephalosporins notably cefotaxime and ceftazidime. SHV-4 causes particularly high levels of resistance to aztreonam and ceftazidime. This Klebsiella pneumoniae protein is Beta-lactamase SHV-4 (bla).